We begin with the raw amino-acid sequence, 346 residues long: N-acetyl-gamma-glutamyl-phosphate reductase (346 aa).

Cysteine 150 is an active-site residue.

Belongs to the NAGSA dehydrogenase family. Type 1 subfamily.

The protein resides in the cytoplasm. It catalyses the reaction N-acetyl-L-glutamate 5-semialdehyde + phosphate + NADP(+) = N-acetyl-L-glutamyl 5-phosphate + NADPH + H(+). The protein operates within amino-acid biosynthesis; L-arginine biosynthesis; N(2)-acetyl-L-ornithine from L-glutamate: step 3/4. In terms of biological role, catalyzes the NADPH-dependent reduction of N-acetyl-5-glutamyl phosphate to yield N-acetyl-L-glutamate 5-semialdehyde. The protein is N-acetyl-gamma-glutamyl-phosphate reductase of Acetivibrio thermocellus (strain ATCC 27405 / DSM 1237 / JCM 9322 / NBRC 103400 / NCIMB 10682 / NRRL B-4536 / VPI 7372) (Clostridium thermocellum).